The sequence spans 105 residues: Cyclotide vibi-J (105 aa).

The N-terminal stretch at 1–9 is a signal peptide; the sequence is AAFALPALA. Positions 10 to 71 are excised as a propeptide; it reads TSFEKDFITH…KSSNSINALG (62 aa). Residues 72 to 102 constitute a cross-link (cyclopeptide (Gly-Asn)); sequence GTFPCGESCVWIPCISKVIGCACKSKVCYKN. Cystine bridges form between C76–C92, C80–C94, and C85–C99. Residues 103–105 constitute a propeptide that is removed on maturation; that stretch reads SLA.

This is a cyclic peptide.

Probably participates in a plant defense mechanism. The polypeptide is Cyclotide vibi-J (Viola biflora (Yellow wood violet)).